Consider the following 193-residue polypeptide: MFQNHKSEILLATPLIKDDAIFTKSVIYLCQNDRHGAMGLIINKPLSDTLRDVFEELEISHHNTFNEILDYPLYMGGPISPHKIMILHTTNGRNYSSTIKLDEGLAITASMDILEDLANNILPEYFLPVVGYSCWTADQLTDEIKSNDWIVTNKLSKKILFNHENKVKWQNHIEHAGYTLQSLDSLFKNIGNC.

Belongs to the UPF0301 (AlgH) family.

The polypeptide is UPF0301 protein Fphi_1754 (Francisella philomiragia subsp. philomiragia (strain ATCC 25017 / CCUG 19701 / FSC 153 / O#319-036)).